The sequence spans 361 residues: Geranylgeranyl pyrophosphate synthase 3 (361 aa).

The segment at 44–63 is disordered; it reads DSNGSKELAPNGAQSRVQKP. 3 residues coordinate isopentenyl diphosphate: K81, R84, and H113. 2 residues coordinate Mg(2+): D120 and D124. Residue R129 participates in dimethylallyl diphosphate binding. R130 provides a ligand contact to isopentenyl diphosphate. 3 residues coordinate dimethylallyl diphosphate: K207, T208, and Q244. D247 contributes to the Mg(2+) binding site. Dimethylallyl diphosphate-binding residues include N251, K261, and K271.

The protein belongs to the FPP/GGPP synthase family. Requires Mg(2+) as cofactor.

The catalysed reaction is isopentenyl diphosphate + dimethylallyl diphosphate = (2E)-geranyl diphosphate + diphosphate. It catalyses the reaction isopentenyl diphosphate + (2E)-geranyl diphosphate = (2E,6E)-farnesyl diphosphate + diphosphate. It carries out the reaction isopentenyl diphosphate + (2E,6E)-farnesyl diphosphate = (2E,6E,10E)-geranylgeranyl diphosphate + diphosphate. Its function is as follows. Geranylgeranyl pyrophosphate synthase; part of the gene cluster 25 that mediates the biosynthesis of an isoprenoid secondary metabolite. The sequence is that of Geranylgeranyl pyrophosphate synthase 3 (GGS3) from Zymoseptoria tritici (strain CBS 115943 / IPO323) (Speckled leaf blotch fungus).